We begin with the raw amino-acid sequence, 577 residues long: Torulene dioxygenase (577 aa).

The interval M1 to A20 is disordered. The Fe(2+) site is built by H239, H291, H361, and H570.

It belongs to the carotenoid oxygenase family. Fe(2+) serves as cofactor.

The protein localises to the cytoplasm. It is found in the cytosol. The enzyme catalyses torulene + O2 = 4'-apo-beta-carotenal + 3-methyl-2-butenal. It participates in carotenoid biosynthesis. In terms of biological role, torulene dioxygenase; part of pathway that mediates the biosynthesis of neurosporaxanthin, a carboxylic apocarotenoid acting as an essential protective pigments and leading to orange pigmentation. CarT mediates the cleavage of torulene into beta-apo-4'-carotenal, the aldehyde corresponding to the acidic neurosporaxanthin. Is also active on other monocyclic synthetic substrates such as beta-apo-8'-carotenal and beta-apo-10'-carotenal to produce beta-apo-14'-carotenal and retinal(beta-apo-15'-carotenal), respectively. Neurosporaxanthin is synthesized from geranyl-geranyl pyrophosphate (GGPP) through several enzymatic activities. Phytoene synthase activity performed by the bifunctional enzyme carAR first produces phytoene from geranyl-geranyl pyrophosphate (GGPP). The phytoene dehydrogenase carB then introduces 4 desaturations to lead to lycopene which is substrate of the carotene cyclase activity of carAR that leads to the production of gamma-carotene. CarB then performs a 5th desaturation reaction to yield torulene. Torulene is the substrate of the dioxidase carT that breaks the molecule, removing five carbon atoms to yield beta-apo-4'-carotenal, whereas the aldehyde dehydrogenase carD mediates the last step by converting beta-apo-4'-carotenal into neurosporaxanthin. The chain is Torulene dioxygenase from Gibberella fujikuroi (strain CBS 195.34 / IMI 58289 / NRRL A-6831) (Bakanae and foot rot disease fungus).